The sequence spans 339 residues: Protein LicA (339 aa).

A run of 9 repeats spans residues 4–7 (INQS), 8–11 (INQS), 12–15 (INQS), 16–19 (INQS), 20–23 (INQS), 24–27 (INQS), 28–31 (INQS), 32–35 (INQS), and 36–39 (INQS). The 9 X 4 AA tandem repeats of I-N-Q-S stretch occupies residues 4-39 (INQSINQSINQSINQSINQSINQSINQSINQSINQS).

It belongs to the peptidase S49 family.

In terms of biological role, mediates phase variation of the LOS 6A2 and 12D9 epitopes. Phase variation of H.influenza LOS epitopes expressed by LicA is determined by a translational switch. The protein is Protein LicA (licA) of Haemophilus influenzae.